The following is an 89-amino-acid chain: Putative regulatory protein PCC8801_0196 (89 aa).

It belongs to the RemA family.

In Rippkaea orientalis (strain PCC 8801 / RF-1) (Cyanothece sp. (strain PCC 8801)), this protein is Putative regulatory protein PCC8801_0196.